Consider the following 382-residue polypeptide: UBP1-associated proteins 1B (382 aa).

Residues 1–99 are disordered; sequence MAKEGEERKK…SDESEEIVDS (99 aa). Positions 10–22 are enriched in basic residues; that stretch reads KEKKEKKERKERK. A compositionally biased stretch (basic and acidic residues) spans 23 to 34; that stretch reads RREAEELAVREK. The 86-residue stretch at 163–248 folds into the RRM domain; that stretch reads RNIFVRGLGW…RPFNSGKPRE (86 aa).

The protein localises to the nucleus. Acts as a component of a complex regulating the turnover of mRNAs in the nucleus. Binds with high affinity to RNA molecules that contain U-rich sequences in 3'-UTRs. May function in complex with UBP1 and contribute to the stabilization of mRNAs in the nucleus. The protein is UBP1-associated proteins 1B (UBA1B) of Arabidopsis thaliana (Mouse-ear cress).